A 356-amino-acid chain; its full sequence is Alanine racemase (356 aa).

Lysine 35 functions as the Proton acceptor; specific for D-alanine in the catalytic mechanism. Position 35 is an N6-(pyridoxal phosphate)lysine (lysine 35). Arginine 130 lines the substrate pocket. Tyrosine 253 (proton acceptor; specific for L-alanine) is an active-site residue. A substrate-binding site is contributed by methionine 301.

This sequence belongs to the alanine racemase family. Pyridoxal 5'-phosphate is required as a cofactor.

The catalysed reaction is L-alanine = D-alanine. It functions in the pathway amino-acid biosynthesis; D-alanine biosynthesis; D-alanine from L-alanine: step 1/1. Its function is as follows. Catalyzes the interconversion of L-alanine and D-alanine. May also act on other amino acids. This Paraburkholderia phytofirmans (strain DSM 17436 / LMG 22146 / PsJN) (Burkholderia phytofirmans) protein is Alanine racemase (alr).